Reading from the N-terminus, the 308-residue chain is Eukaryotic translation initiation factor 3 subunit G-B (308 aa).

Disordered stretches follow at residues 1–35 (MPTG…KQDP) and 176–227 (STAD…DDNA). The span at 185–194 (GAEPEPAQAP) shows a compositional bias: low complexity. Residues 209–227 (GGSRRGESMQPNRRADDNA) show a composition bias toward basic and acidic residues. Residues 227–305 (ATIRVTNLSE…LILNVEWAKP (79 aa)) enclose the RRM domain.

The protein belongs to the eIF-3 subunit G family. Component of the eukaryotic translation initiation factor 3 (eIF-3) complex, which is composed of 13 subunits: eif3a, eif3b, eif3c, eif3d, eif3e, eif3f, eif3g, eif3h, eif3i, eif3j, eif3k, eif3l and eif3m.

The protein localises to the cytoplasm. RNA-binding component of the eukaryotic translation initiation factor 3 (eIF-3) complex, which is involved in protein synthesis of a specialized repertoire of mRNAs and, together with other initiation factors, stimulates binding of mRNA and methionyl-tRNAi to the 40S ribosome. The eIF-3 complex specifically targets and initiates translation of a subset of mRNAs involved in cell proliferation. This subunit can bind 18S rRNA. In Xenopus laevis (African clawed frog), this protein is Eukaryotic translation initiation factor 3 subunit G-B (eif3g-b).